The following is a 302-amino-acid chain: CASP-like protein 4A2 (302 aa).

Over residues 1–13 the composition is skewed to polar residues; the sequence is MALQAQQQATPSP. The tract at residues 1–134 is disordered; it reads MALQAQQQAT…APPPHAQVRS (134 aa). The Cytoplasmic portion of the chain corresponds to 1-154; it reads MALQAQQQAT…RKRRAAVMQR (154 aa). Over residues 40–60 the composition is skewed to low complexity; the sequence is VVVASTHHAAAAARYVPPRAT. Over residues 99–129 the composition is skewed to pro residues; that stretch reads KTPPPAPPLPAAPPPPPAASPAPAPRAPPPH. A helical transmembrane segment spans residues 155 to 175; the sequence is AALLARAAAAGLCLAALAVLA. Residues 176 to 197 lie on the Extracellular side of the membrane; that stretch reads SDTRRGWARDSYSNYAQFRYSE. The chain crosses the membrane as a helical span at residues 198-218; that stretch reads AVNVVGFLYSVFQFVALAELM. Residues 219–238 are Cytoplasmic-facing; that stretch reads RRNKHLIPHPKRDLFDFTMD. A helical membrane pass occupies residues 239 to 256; it reads QVVAYLLISSSSSATARA. Residues 257-273 are Extracellular-facing; it reads SDLIENWGSDSFPSMAN. A helical transmembrane segment spans residues 274–294; it reads GSIAISFVAFVVFAICSLISA. Over 295–302 the chain is Cytoplasmic; the sequence is YNLFRRDM.

The protein belongs to the Casparian strip membrane proteins (CASP) family. Homodimer and heterodimers.

Its subcellular location is the cell membrane. This chain is CASP-like protein 4A2, found in Zea mays (Maize).